The chain runs to 600 residues: Methionine--tRNA ligase (600 aa).

The short motif at 11–21 is the 'HIGH' region element; it reads PYANGPRHIGH. Positions 143, 146, 156, and 159 each coordinate Zn(2+). Residues 350-354 carry the 'KMSKS' region motif; the sequence is QFSSS. S353 serves as a coordination point for ATP.

The protein belongs to the class-I aminoacyl-tRNA synthetase family. MetG type 1 subfamily. In terms of assembly, monomer. It depends on Zn(2+) as a cofactor.

The protein localises to the cytoplasm. It carries out the reaction tRNA(Met) + L-methionine + ATP = L-methionyl-tRNA(Met) + AMP + diphosphate. Functionally, is required not only for elongation of protein synthesis but also for the initiation of all mRNA translation through initiator tRNA(fMet) aminoacylation. This Kineococcus radiotolerans (strain ATCC BAA-149 / DSM 14245 / SRS30216) protein is Methionine--tRNA ligase.